The chain runs to 476 residues: Proline--tRNA ligase (476 aa).

It belongs to the class-II aminoacyl-tRNA synthetase family. ProS type 3 subfamily. Homodimer.

The protein localises to the cytoplasm. The catalysed reaction is tRNA(Pro) + L-proline + ATP = L-prolyl-tRNA(Pro) + AMP + diphosphate. Catalyzes the attachment of proline to tRNA(Pro) in a two-step reaction: proline is first activated by ATP to form Pro-AMP and then transferred to the acceptor end of tRNA(Pro). In Mycoplasmopsis pulmonis (strain UAB CTIP) (Mycoplasma pulmonis), this protein is Proline--tRNA ligase.